Consider the following 75-residue polypeptide: Gas vesicle protein S (75 aa).

Belongs to the gas vesicle GvpA family.

Its subcellular location is the gas vesicle. Probably a minor component of the gas vesicle. Gas vesicles are hollow, gas filled proteinaceous nanostructures found in some microorganisms. It is not clear what function gas vesicles perform in soil bacteria. This chain is Gas vesicle protein S, found in Streptomyces sp. (strain CB03234).